A 76-amino-acid polypeptide reads, in one-letter code: UPF0291 protein BT9727_1737 (76 aa).

This sequence belongs to the UPF0291 family.

The protein resides in the cytoplasm. The chain is UPF0291 protein BT9727_1737 from Bacillus thuringiensis subsp. konkukian (strain 97-27).